Consider the following 495-residue polypeptide: Probable cytochrome P450 513C1 (495 aa).

A helical transmembrane segment spans residues 1-21; that stretch reads MNYLVLILVSLVSIYFLFIKN. Heme is bound at residue Cys441.

The protein belongs to the cytochrome P450 family. It depends on heme as a cofactor.

It localises to the membrane. In Dictyostelium discoideum (Social amoeba), this protein is Probable cytochrome P450 513C1 (cyp513C1).